Here is a 431-residue protein sequence, read N- to C-terminus: Enolase (431 aa).

Substrate contacts are provided by His-157 and Glu-166. The Proton donor role is filled by Glu-209. Mg(2+) is bound by residues Asp-244, Glu-293, and Asp-318. 2 residues coordinate substrate: Glu-293 and Asp-318. Lys-343 acts as the Proton acceptor in catalysis. Substrate is bound by residues 370 to 373 (SHRS) and Lys-394.

The protein belongs to the enolase family. Homodimer. Mg(2+) serves as cofactor.

It localises to the cytoplasm. It catalyses the reaction (2R)-2-phosphoglycerate = phosphoenolpyruvate + H2O. Its pathway is carbohydrate degradation; glycolysis; pyruvate from D-glyceraldehyde 3-phosphate: step 4/5. The chain is Enolase (ENO) from Fasciola hepatica (Liver fluke).